The sequence spans 274 residues: Acetylaranotin bis-thiomethyltransferase (274 aa).

This sequence belongs to the class I-like SAM-binding methyltransferase superfamily.

The protein operates within mycotoxin biosynthesis. Acetylaranotin bis-thiomethyltransferase involved in the biosynthesis of acetylaranotin derivatives, members of the epipolythiodioxopiperazine (ETP) class of toxins characterized by a disulfide-bridged cyclic dipeptide. The first step of acetylaranotin biosynthesis is performed by the NRPS ataP which produces diketopiperazine cyclo-L-Phe-L-Phe via the condensation of 2 phenylalanines (L-Phe). The ataC domain of ataTC then catalyzes the formation of bishydroxylation of cyclo-L-Phe-L-Phe. The glutathione S-transferase domain ataG in ataIMG further catalyzes the conjugation of two glutathiones to the bishydroxylated intermediate. Next, the dipeptidase ataJ removes the Glu residues. The following step is performed by the carbon sulfur lyase domain ataI of ataIMG which may convert the bis-cysteinyl adduct to yield an epidithiol intermediate. The ataT domain from ataTC then catalyzes the oxidation of the free dithiols, followed by a cyclization step catalyzed by the cytochrome P450 ataF. AtaF probably acts as an epoxidase to promote a dual epoxidation formation at C8 and C9 along with C8' and C9', followed by the spontaneous nucleophilic attack of the amide nitrogens N10 and N10' to yield an intermediate with the pyrrolidine partial structure. The final steps of acetylaranotin biosynthesis involve the acetylation and ring rearrangement of an epitetrathiodiketopiperazine intermediate to produce acetylaranotin. AtaH probably catalyzes the acetylation of epitetrathiodiketopiperazine to produce a diacetate and ataY is responsible for the formation of the dihydrooxepin moiety that converts the diacetate intermediate to acetylaranotin via acetylapoaranotin. Both enzymes could function independently in the absence of the other. The acetylaranotin bis-thiomethyltransferase ataS located outside of acetylaranotin gene cluster is the main thiomethyltransferase responsible for converting acetylaranotin and its related intermediates to their methylated forms. The polypeptide is Acetylaranotin bis-thiomethyltransferase (Aspergillus terreus (strain NIH 2624 / FGSC A1156)).